Here is a 533-residue protein sequence, read N- to C-terminus: Dipeptide-binding protein (533 aa).

Positions 1-24 (MRKILPLRAWLAAGLILGSPFSHA) are cleaved as a signal peptide.

This sequence belongs to the bacterial solute-binding protein 5 family.

Its subcellular location is the periplasm. Functionally, binds different dipeptides. Probably bind only L-amino acid containing dipeptides. This chain is Dipeptide-binding protein, found in Pseudomonas aeruginosa (strain ATCC 15692 / DSM 22644 / CIP 104116 / JCM 14847 / LMG 12228 / 1C / PRS 101 / PAO1).